We begin with the raw amino-acid sequence, 535 residues long: Keratin, type II cytoskeletal 79 (535 aa).

A compositionally biased stretch (polar residues) spans 1–12 (MRSSVSRQTYST). The disordered stretch occupies residues 1 to 52 (MRSSVSRQTYSTKGGFSSNSASGGSGSQARTSFSSVTVSRSSGSGGGAHCGP). The head stretch occupies residues 1–141 (MRSSVSRQTY…DPEIQRVRTQ (141 aa)). Residues 32–42 (SFSSVTVSRSS) show a composition bias toward low complexity. Over residues 43–52 (GSGGGAHCGP) the composition is skewed to gly residues. A coil 1A region spans residues 142–177 (EREQIKTLNNKFASFIDKVRFLEQQNKVLETKWALL). Residues 142 to 457 (EREQIKTLNN…KLLESEESRM (316 aa)) form the IF rod domain. The linker 1 stretch occupies residues 178-198 (QEQGQNLGVTRNNLEPLFEAY). Residues 199 to 290 (LGSMRSTLDR…QLYEMELSQV (92 aa)) are coil 1B. Positions 291–314 (QTHVSNTNVVLSMDNNRNLDLDSI) are linker 12. The interval 315–453 (IAEVKAQYEL…ATYRKLLESE (139 aa)) is coil 2. The segment at 454–535 (ESRMSGECPS…TTVKTSSQRY (82 aa)) is tail.

This sequence belongs to the intermediate filament family. As to quaternary structure, heterotetramer of two type I and two type II keratins. As to expression, expressed in skeletal muscle, skin and scalp, but not in any other tissues or organs examined.

This Homo sapiens (Human) protein is Keratin, type II cytoskeletal 79 (KRT79).